A 488-amino-acid polypeptide reads, in one-letter code: MSQSVESRTRIKSERYESGVIPYAKMGYWDADYVIKDTDVLALFRITPQPGVDPIEASAAIAGESSTATWTVVWTDLLTACDLYRAKAYRVDPVPNVADQYFAYIAYDIDLFEEGSIANLTASIIGNVFGFKAVKALRLEDMRMPVAYLKTFQGPATGLIVERERMDKFGRPFLGATVKPKLGLSGKNYGRVVYEGLKGGLDFLKDDENINSQPFMRWRERYLYSMEGVNKASAAAGELKGHYLNVTAATMEDMYERAEFSKVVGSVICMIDLVIGYTAIQSMAIWARKNDMILHLHRAGNSTYSRQKNHGMNFRVICKWMRMAGVDHIHAGTVVGKLEGDPLMIKGFYNTLLESETDINLPQGLFFAQNWASLRKVVPVASGGIHAGQMHQLLDYLGDDVVLQFGGGTIGHPDGIQAGATANRVALESMVMARNEGRDYVAEGPQILRDAAKTCGPLQTALDLWKDISFNYTSTDTADFVETPTANV.

The substrate site is built by N127 and T177. The active-site Proton acceptor is K179. K181 contributes to the substrate binding site. 3 residues coordinate Mg(2+): K205, D207, and E208. K205 is modified (N6-carboxylysine). The active-site Proton acceptor is the H297. R298, H330, and S382 together coordinate substrate.

It belongs to the RuBisCO large chain family. Type I subfamily. Heterohexadecamer of 8 large chains and 8 small chains. Mg(2+) is required as a cofactor.

Its subcellular location is the plastid. It is found in the chloroplast. It catalyses the reaction 2 (2R)-3-phosphoglycerate + 2 H(+) = D-ribulose 1,5-bisphosphate + CO2 + H2O. The catalysed reaction is D-ribulose 1,5-bisphosphate + O2 = 2-phosphoglycolate + (2R)-3-phosphoglycerate + 2 H(+). Its function is as follows. RuBisCO catalyzes two reactions: the carboxylation of D-ribulose 1,5-bisphosphate, the primary event in carbon dioxide fixation, as well as the oxidative fragmentation of the pentose substrate in the photorespiration process. Both reactions occur simultaneously and in competition at the same active site. In Porphyra umbilicalis (Purple laver), this protein is Ribulose bisphosphate carboxylase large chain (rbcL).